A 501-amino-acid polypeptide reads, in one-letter code: Leukocyte receptor cluster member 9 (501 aa).

Disordered regions lie at residues 1–43 (MGSR…PAPP), 61–86 (RQPH…KPPL), 203–234 (GQEA…GELE), and 281–300 (QALG…WGPA). A C3H1-type zinc finger spans residues 40-67 (PAPPPACRFFLEGRCRFGARCRQPHPGA).

This Homo sapiens (Human) protein is Leukocyte receptor cluster member 9 (LENG9).